The chain runs to 223 residues: DNA mismatch repair protein MutH (223 aa).

This sequence belongs to the MutH family.

The protein localises to the cytoplasm. Functionally, sequence-specific endonuclease that cleaves unmethylated GATC sequences. It is involved in DNA mismatch repair. The chain is DNA mismatch repair protein MutH from Shewanella baltica (strain OS195).